The chain runs to 281 residues: 3-methyl-2-oxobutanoate hydroxymethyltransferase (281 aa).

Asp49 and Asp88 together coordinate Mg(2+). 3-methyl-2-oxobutanoate contacts are provided by residues 49 to 50 (DS), Asp88, and Lys118. Glu120 contributes to the Mg(2+) binding site. Residue Glu186 is the Proton acceptor of the active site.

Belongs to the PanB family. In terms of assembly, homodecamer; pentamer of dimers. Mg(2+) is required as a cofactor.

It localises to the cytoplasm. It carries out the reaction 3-methyl-2-oxobutanoate + (6R)-5,10-methylene-5,6,7,8-tetrahydrofolate + H2O = 2-dehydropantoate + (6S)-5,6,7,8-tetrahydrofolate. Its pathway is cofactor biosynthesis; (R)-pantothenate biosynthesis; (R)-pantoate from 3-methyl-2-oxobutanoate: step 1/2. Catalyzes the reversible reaction in which hydroxymethyl group from 5,10-methylenetetrahydrofolate is transferred onto alpha-ketoisovalerate to form ketopantoate. In Chelativorans sp. (strain BNC1), this protein is 3-methyl-2-oxobutanoate hydroxymethyltransferase.